A 397-amino-acid polypeptide reads, in one-letter code: CCA-adding enzyme (397 aa).

The ATP site is built by Gly-26 and Arg-29. Residues Gly-26 and Arg-29 each contribute to the CTP site. Asp-39 and Asp-41 together coordinate Mg(2+). 5 residues coordinate ATP: Arg-110, Asp-153, Arg-156, Arg-159, and Arg-162. Arg-110, Asp-153, Arg-156, Arg-159, and Arg-162 together coordinate CTP.

Belongs to the tRNA nucleotidyltransferase/poly(A) polymerase family. Bacterial CCA-adding enzyme type 3 subfamily. As to quaternary structure, homodimer. Mg(2+) serves as cofactor.

The enzyme catalyses a tRNA precursor + 2 CTP + ATP = a tRNA with a 3' CCA end + 3 diphosphate. The catalysed reaction is a tRNA with a 3' CCA end + 2 CTP + ATP = a tRNA with a 3' CCACCA end + 3 diphosphate. In terms of biological role, catalyzes the addition and repair of the essential 3'-terminal CCA sequence in tRNAs without using a nucleic acid template. Adds these three nucleotides in the order of C, C, and A to the tRNA nucleotide-73, using CTP and ATP as substrates and producing inorganic pyrophosphate. tRNA 3'-terminal CCA addition is required both for tRNA processing and repair. Also involved in tRNA surveillance by mediating tandem CCA addition to generate a CCACCA at the 3' terminus of unstable tRNAs. While stable tRNAs receive only 3'-terminal CCA, unstable tRNAs are marked with CCACCA and rapidly degraded. This Bacillus cereus (strain Q1) protein is CCA-adding enzyme.